Consider the following 257-residue polypeptide: Imidazole glycerol phosphate synthase subunit HisF (257 aa).

Residues Asp-11 and Asp-130 contribute to the active site.

The protein belongs to the HisA/HisF family. In terms of assembly, heterodimer of HisH and HisF.

Its subcellular location is the cytoplasm. The catalysed reaction is 5-[(5-phospho-1-deoxy-D-ribulos-1-ylimino)methylamino]-1-(5-phospho-beta-D-ribosyl)imidazole-4-carboxamide + L-glutamine = D-erythro-1-(imidazol-4-yl)glycerol 3-phosphate + 5-amino-1-(5-phospho-beta-D-ribosyl)imidazole-4-carboxamide + L-glutamate + H(+). It participates in amino-acid biosynthesis; L-histidine biosynthesis; L-histidine from 5-phospho-alpha-D-ribose 1-diphosphate: step 5/9. Functionally, IGPS catalyzes the conversion of PRFAR and glutamine to IGP, AICAR and glutamate. The HisF subunit catalyzes the cyclization activity that produces IGP and AICAR from PRFAR using the ammonia provided by the HisH subunit. The polypeptide is Imidazole glycerol phosphate synthase subunit HisF (Shewanella sp. (strain W3-18-1)).